A 247-amino-acid polypeptide reads, in one-letter code: Orotidine 5'-phosphate decarboxylase (247 aa).

Residues aspartate 16, lysine 38, 66–75 (DLKFHDIPNT), threonine 130, arginine 191, glutamine 200, glycine 220, and arginine 221 each bind substrate. The active-site Proton donor is lysine 68.

It belongs to the OMP decarboxylase family. Type 1 subfamily. Homodimer.

The enzyme catalyses orotidine 5'-phosphate + H(+) = UMP + CO2. Its pathway is pyrimidine metabolism; UMP biosynthesis via de novo pathway; UMP from orotate: step 2/2. In terms of biological role, catalyzes the decarboxylation of orotidine 5'-monophosphate (OMP) to uridine 5'-monophosphate (UMP). The protein is Orotidine 5'-phosphate decarboxylase of Rhodospirillum rubrum (strain ATCC 11170 / ATH 1.1.1 / DSM 467 / LMG 4362 / NCIMB 8255 / S1).